The chain runs to 122 residues: Large ribosomal subunit protein uL14c (122 aa).

It belongs to the universal ribosomal protein uL14 family. As to quaternary structure, part of the 50S ribosomal subunit.

The protein localises to the plastid. It localises to the chloroplast. In terms of biological role, binds to 23S rRNA. The chain is Large ribosomal subunit protein uL14c from Stigeoclonium helveticum (Green alga).